We begin with the raw amino-acid sequence, 85 residues long: Large ribosomal subunit protein bL27 (85 aa).

A disordered region spans residues 1 to 22 (MAHKKGVGSTRNGRDSESKRLG).

It belongs to the bacterial ribosomal protein bL27 family.

The chain is Large ribosomal subunit protein bL27 from Geobacter metallireducens (strain ATCC 53774 / DSM 7210 / GS-15).